Reading from the N-terminus, the 270-residue chain is 5'-nucleotidase SurE (270 aa).

Residues D8, D9, S40, and N98 each contribute to the a divalent metal cation site.

Belongs to the SurE nucleotidase family. The cofactor is a divalent metal cation.

It is found in the cytoplasm. It carries out the reaction a ribonucleoside 5'-phosphate + H2O = a ribonucleoside + phosphate. Nucleotidase that shows phosphatase activity on nucleoside 5'-monophosphates. In Cyanothece sp. (strain PCC 7425 / ATCC 29141), this protein is 5'-nucleotidase SurE.